The chain runs to 151 residues: Lipoprotein signal peptidase (151 aa).

Helical transmembrane passes span G61 to G81 and S88 to I107. Residues D117 and D133 contribute to the active site. The chain crosses the membrane as a helical span at residues V128–I148.

It belongs to the peptidase A8 family.

Its subcellular location is the cell inner membrane. It carries out the reaction Release of signal peptides from bacterial membrane prolipoproteins. Hydrolyzes -Xaa-Yaa-Zaa-|-(S,diacylglyceryl)Cys-, in which Xaa is hydrophobic (preferably Leu), and Yaa (Ala or Ser) and Zaa (Gly or Ala) have small, neutral side chains.. Its pathway is protein modification; lipoprotein biosynthesis (signal peptide cleavage). Functionally, this protein specifically catalyzes the removal of signal peptides from prolipoproteins. This chain is Lipoprotein signal peptidase, found in Synechococcus sp. (strain RCC307).